The following is an 80-amino-acid chain: Defensin-like protein 291 (80 aa).

An N-terminal signal peptide occupies residues 1 to 29; it reads MAASKTTIFIVFVLCLSCTLLVNISGIQA. Intrachain disulfides connect C50–C70, C56–C75, and C62–C77.

This sequence belongs to the DEFL family.

It localises to the secreted. This chain is Defensin-like protein 291, found in Arabidopsis thaliana (Mouse-ear cress).